The chain runs to 359 residues: MKFGNFLLTYQPPQFSQTEVMKRLVKLGRISEECGFDTVWLLEHHFTEFGLLGNPYVAAAYLLGATKKLNVGTAAIVLPTAHPVRQLEDVNLLDQMSKGRFRFGICRGLYNKDFRVFGTDMNNSRALTECWYGLIKNGMTEGYMEADNEHIKFHKVKVNPTAYSKGGAPVYVVAESASTTEWAAQFGLPMILSWIINTNEKKAQLELYNEVAQEYGHDIHNIDHCLSYITSVNYDSNKAQEICRDFLGHWYDSYVNATTIFDDSDKTRGYDFNKGQWRDFVLKGHRDTNRRIDYSYEINPVGTPQECIDIIQKDIDATGISNICCGFEANGTVDEIIASMKLFQSDVMPFLKEKQRSLL.

The protein belongs to the bacterial luciferase oxidoreductase family. In terms of assembly, heterodimer of an alpha and a beta chain.

It catalyses the reaction a long-chain fatty aldehyde + FMNH2 + O2 = a long-chain fatty acid + hnu + FMN + H2O + 2 H(+). Functionally, light-emitting reaction in luminous bacteria. In Photorhabdus laumondii subsp. laumondii (strain DSM 15139 / CIP 105565 / TT01) (Photorhabdus luminescens subsp. laumondii), this protein is Alkanal monooxygenase alpha chain (luxA).